Reading from the N-terminus, the 246-residue chain is Proteasome subunit alpha type-6-B (246 aa).

It belongs to the peptidase T1A family. Component of the 20S core complex of the 26S proteasome. The 26S proteasome is composed of a core protease (CP), known as the 20S proteasome, capped at one or both ends by the 19S regulatory particle (RP/PA700). The 20S proteasome core is composed of 28 subunits that are arranged in four stacked rings, resulting in a barrel-shaped structure. The two end rings are each formed by seven alpha subunits, and the two central rings are each formed by seven beta subunits. The catalytic chamber with the active sites is on the inside of the barrel.

Its subcellular location is the cytoplasm. It is found in the nucleus. The proteasome is a multicatalytic proteinase complex which is characterized by its ability to cleave peptides with Arg, Phe, Tyr, Leu, and Glu adjacent to the leaving group at neutral or slightly basic pH. The proteasome has an ATP-dependent proteolytic activity. This chain is Proteasome subunit alpha type-6-B (PAA2), found in Arabidopsis thaliana (Mouse-ear cress).